A 501-amino-acid chain; its full sequence is Alpha-internexin (501 aa).

Residues 1-87 (MSFGSEHYLC…SQAAARTNEY (87 aa)) are head. Serine 72 carries the phosphoserine modification. Positions 88–129 (KIIRTNEKEQLQGLNDRFAVFIEKVHQLETQNRALEAELAAL) are coil 1A. The region spanning 94 to 407 (EKEQLQGLND…KLLEGEETRF (314 aa)) is the IF rod domain. Positions 130–142 (RQRHAEPSRVGEL) are linker 1. The tract at residues 143–238 (FQRELRELRA…QVHDEEVAEL (96 aa)) is coil 1B. At serine 219 the chain carries Phosphoserine. The tract at residues 239–262 (LATLQASSQAAAEVDVAVAKPDLT) is linker 2. The segment at 263–408 (SALREIRAQY…LLEGEETRFS (146 aa)) is coil 2. Lysine 290 carries the N6-acetyllysine modification. Serine 335 and serine 498 each carry phosphoserine. A tail region spans residues 409–501 (TGGLSISGLN…EESTSSSQKM (93 aa)). Residues 441–501 (SAGLSLKKEE…EESTSSSQKM (61 aa)) form a disordered region. The span at 488 to 501 (KSATEESTSSSQKM) shows a compositional bias: polar residues.

Belongs to the intermediate filament family. Forms homodimers (in vitro). Forms heterodimers with NEFL, NEFM or NEFH (in vitro). Post-translationally, O-glycosylated.

Functionally, class-IV neuronal intermediate filament that is able to self-assemble. It is involved in the morphogenesis of neurons. It may form an independent structural network without the involvement of other neurofilaments or it may cooperate with NEFL to form the filamentous backbone to which NEFM and NEFH attach to form the cross-bridges. May also cooperate with the neuronal intermediate filament protein PRPH to form filamentous networks. The sequence is that of Alpha-internexin (Ina) from Mus musculus (Mouse).